Consider the following 470-residue polypeptide: ATP synthase subunit beta (470 aa).

155–162 (GGAGVGKT) contacts ATP.

It belongs to the ATPase alpha/beta chains family. F-type ATPases have 2 components, CF(1) - the catalytic core - and CF(0) - the membrane proton channel. CF(1) has five subunits: alpha(3), beta(3), gamma(1), delta(1), epsilon(1). CF(0) has three main subunits: a(1), b(2) and c(9-12). The alpha and beta chains form an alternating ring which encloses part of the gamma chain. CF(1) is attached to CF(0) by a central stalk formed by the gamma and epsilon chains, while a peripheral stalk is formed by the delta and b chains.

The protein resides in the cell membrane. It carries out the reaction ATP + H2O + 4 H(+)(in) = ADP + phosphate + 5 H(+)(out). Functionally, produces ATP from ADP in the presence of a proton gradient across the membrane. The catalytic sites are hosted primarily by the beta subunits. This chain is ATP synthase subunit beta, found in Staphylococcus aureus (strain MW2).